The chain runs to 126 residues: MKIIATLDAPAAIGPYVQGKIVNGLLYASGQIPLNPLNGEIVGDSIETQTEQVMKNISAILKEAHSDFDLVIKTTCFLKNIEDFSRFNAIYSKFFDKEFPARSAVGVAGLPKNVLIEIEVIAEVKS.

The protein belongs to the RutC family.

In terms of biological role, implicated in the regulation of isoleucine biosynthesis. The polypeptide is Putative regulator AldR (aldR) (Lactococcus lactis subsp. lactis (strain IL1403) (Streptococcus lactis)).